A 304-amino-acid polypeptide reads, in one-letter code: Putative S-adenosyl-L-methionine-dependent methyltransferase Mmcs_1043 (304 aa).

S-adenosyl-L-methionine-binding positions include Asp130 and 159–160 (DL).

It belongs to the UPF0677 family.

Exhibits S-adenosyl-L-methionine-dependent methyltransferase activity. The protein is Putative S-adenosyl-L-methionine-dependent methyltransferase Mmcs_1043 of Mycobacterium sp. (strain MCS).